The primary structure comprises 268 residues: Peptide transport system ATP-binding protein SapF (268 aa).

The 246-residue stretch at 6-251 (LEVRNLSKTF…PLHELTKRLI (246 aa)) folds into the ABC transporter domain. 47–54 (GENGSGKS) lines the ATP pocket.

It belongs to the ABC transporter superfamily.

The protein resides in the cell inner membrane. Functionally, involved in a peptide intake transport system that plays a role in the resistance to antimicrobial peptides. This Escherichia coli O6:H1 (strain CFT073 / ATCC 700928 / UPEC) protein is Peptide transport system ATP-binding protein SapF (sapF).